The following is a 382-amino-acid chain: Galactokinase (382 aa).

Position 34–37 (34–37 (EHTD)) interacts with substrate. An ATP-binding site is contributed by 124 to 130 (GAGLSSS). The Mg(2+) site is built by serine 130 and glutamate 162. The active-site Proton acceptor is the aspartate 174. Substrate is bound at residue tyrosine 223.

Belongs to the GHMP kinase family. GalK subfamily.

It is found in the cytoplasm. The catalysed reaction is alpha-D-galactose + ATP = alpha-D-galactose 1-phosphate + ADP + H(+). It functions in the pathway carbohydrate metabolism; galactose metabolism. Functionally, catalyzes the transfer of the gamma-phosphate of ATP to D-galactose to form alpha-D-galactose-1-phosphate (Gal-1-P). The protein is Galactokinase of Aeromonas hydrophila subsp. hydrophila (strain ATCC 7966 / DSM 30187 / BCRC 13018 / CCUG 14551 / JCM 1027 / KCTC 2358 / NCIMB 9240 / NCTC 8049).